The primary structure comprises 845 residues: Poly(A) RNA polymerase gld-4 (845 aa).

Residues 1-55 (MNEDSRLSSSQQPSTSTPRSSIPSTMNSDEPNTCRRLSQSQEQPSTSRTCKSETP) form a disordered region. A compositionally biased stretch (low complexity) spans 7–25 (LSSSQQPSTSTPRSSIPST). Polar residues predominate over residues 26–49 (MNSDEPNTCRRLSQSQEQPSTSRT). Residues Asp-139 and Asp-141 each coordinate Mg(2+). Residues 276 to 335 (NLGHLLLRFLELYSLEFNFEEMGISPGQCCYIPKSASGARYGHKQAQPGNLALEDPLLTA) form the PAP-associated domain. Over residues 482 to 506 (KSLEKMPACDDNKKEEELVATRETD) the composition is skewed to basic and acidic residues. Disordered stretches follow at residues 482 to 733 (KSLE…SEEP) and 788 to 845 (NALT…RLQR). A compositionally biased stretch (low complexity) spans 535 to 551 (TSTQSVNTSATVSTAAS). Composition is skewed to polar residues over residues 561-571 (PGLSSSMGNQS) and 579-588 (GINNRNNSAV). A compositionally biased stretch (basic and acidic residues) spans 605–620 (RESKRTQTTSEDKMQD). Basic residues predominate over residues 643 to 653 (SHKHRNAHPQR). Polar residues-rich tracts occupy residues 654–666 (QRPSIRNLSQGSD), 695–732 (RQQTNTRNCGPTNNIPYDSFRSQNKNSTLDGSNNSSEE), 788–805 (NALTTSPMTPPSAHTSMQ), and 819–828 (DNNSATSSTD).

As to quaternary structure, interacts with gls-1 isoform C. Mg(2+) is required as a cofactor. Requires Mn(2+) as cofactor. Germline-specific.

It localises to the cytoplasm. It is found in the cytoplasmic granule. Its subcellular location is the perinuclear region. It carries out the reaction RNA(n) + ATP = RNA(n)-3'-adenine ribonucleotide + diphosphate. Functionally, cytoplasmic poly(A) RNA polymerase that adds successive AMP monomers to the 3'-end of specific RNAs, forming a poly(A) tail. The enzymatic activity is enhanced by its interaction with gls-1. Required, together with gld-2, for early meiotic progression in male and female germ cells and for gld-1 protein accumulation in the hermaphrodite germline. In the germline, forms a complex with gls-1 which directly binds to gld-1 mRNA and prevents its degradation. The chain is Poly(A) RNA polymerase gld-4 from Caenorhabditis elegans.